The primary structure comprises 855 residues: MAEDRGTRLWQFPDHVYLNFTAMHGIQHVVDRISSLAEESVTPAERPPLSWFEAVARADSPDEVPPRELPFRVYLITGNAGSGKSTCIQALTEMLNCVTTGSTRVAALNVFTKLSSAYTSPAIQTIFHDFGFKGSHVQAVLGKFKYPKQPDPKSLVDAQMSDLYYYWDVLKDIANKVVEGGLPETMRVLLSLELKSGKPFTDAAPFLSAATPALIRSNVVLIDEAGVLGKHILTAVVFSWWLHNALWQTRRYAEGKVPVIVCIGSPTQTDAMESVFEHSTLRHLVSNKTNILSHLIRSSEMAERMNLNRNWTIFINNKRCTEQDFGNVLKAFEFGLPMNEGHARFLDQFVVSESYIKDPSKLPGWTRLFASHDDVKVYMSRLHANLRARRSDKFKVFVLPIYTVVSLEAFDKYKELTGQTSLTMEKWLTANASRLGNYSQSRDLDVTTPRFEYGTADGKKFALITTDASHVLNSQISVTKRVKKLVFGFEGSFGDFAAVLSEDTFFKKHGEDHVEFAYRFIAALLFSGMIAFYDFLRTEGLPQDKVDAAYSRLQAVTADLLAATHEQLGIAAAAGAQTGSGARRSRNADAFAFDDDASEEVTDAELDDLFGAMTDNSMDAFYLNYEKLPADAHGQEIFFHFDMLKRLFSERYDALSGLFGKTFTSAPFRTFVGQASFNGSNAFVSSFSGGILSFTSQTDAYTLRGVTRAPVPCFVDELFRGRDWAAAILRETDMPRVVVSDSMGFVSVINHNMSTFVDNVSGEELQMAATVDHGISSNLAMTITRSQGLGLDRVAICFATSQLKLNTAYVAMSRVTSCRYLRMNVNPLRTHYEDTRRVSAHILAALRCKDVKLVY.

ATP is bound at residue 78 to 85 (GNAGSGKS).

It belongs to the herpesviridae helicase family. Associates with the primase and the primase-associated factor to form the helicase-primase complex.

It localises to the host nucleus. Functionally, component of the helicase/primase complex. Unwinds the DNA at the replication forks and generates single-stranded DNA for both leading and lagging strand synthesis. The primase synthesizes short RNA primers on the lagging strand that the polymerase elongates using dNTPs. Possesses helicase-like motifs and therefore may act as the helicase subunit of the complex. This is DNA replication helicase from Amazona oratrix (yellow-headed parrot).